We begin with the raw amino-acid sequence, 178 residues long: Bifunctional protein PyrR (178 aa).

The short motif at 99 to 111 is the PRPP-binding element; that stretch reads VVLVDDVIYTGRT.

The protein belongs to the purine/pyrimidine phosphoribosyltransferase family. PyrR subfamily. As to quaternary structure, homodimer and homohexamer; in equilibrium.

It catalyses the reaction UMP + diphosphate = 5-phospho-alpha-D-ribose 1-diphosphate + uracil. Regulates transcriptional attenuation of the pyrimidine nucleotide (pyr) operon by binding in a uridine-dependent manner to specific sites on pyr mRNA. This disrupts an antiterminator hairpin in the RNA and favors formation of a downstream transcription terminator, leading to a reduced expression of downstream genes. Functionally, also displays a weak uracil phosphoribosyltransferase activity which is not physiologically significant. The protein is Bifunctional protein PyrR of Thermoanaerobacter pseudethanolicus (strain ATCC 33223 / 39E) (Clostridium thermohydrosulfuricum).